Here is a 227-residue protein sequence, read N- to C-terminus: Ribonuclease 3 (227 aa).

Residues 5–127 (LNALQLRLQH…LIGAVYLDAG (123 aa)) form the RNase III domain. Residue E40 participates in Mg(2+) binding. The active site involves D44. 2 residues coordinate Mg(2+): D113 and E116. Residue E116 is part of the active site. Residues 154–224 (DAKTALQEWL…ATAMLELLKA (71 aa)) form the DRBM domain.

The protein belongs to the ribonuclease III family. As to quaternary structure, homodimer. Requires Mg(2+) as cofactor.

The protein localises to the cytoplasm. It catalyses the reaction Endonucleolytic cleavage to 5'-phosphomonoester.. Digests double-stranded RNA. Involved in the processing of primary rRNA transcript to yield the immediate precursors to the large and small rRNAs (23S and 16S). Processes some mRNAs, and tRNAs when they are encoded in the rRNA operon. Processes pre-crRNA and tracrRNA of type II CRISPR loci if present in the organism. The sequence is that of Ribonuclease 3 from Delftia acidovorans (strain DSM 14801 / SPH-1).